Consider the following 901-residue polypeptide: Translation initiation factor IF-2 (901 aa).

The segment at 48–313 is disordered; the sequence is HLNREHGGSS…SSLQQGFTKP (266 aa). Over residues 68–82 the composition is skewed to polar residues; it reads STLSVPGTGGKSKSV. The segment covering 106–226 has biased composition (basic and acidic residues); the sequence is ALAKREAEEQ…RMAEANEGKW (121 aa). Residues 263 to 277 show a composition bias toward basic residues; sequence ARGRGGKAAKQKKGS. A compositionally biased stretch (basic and acidic residues) spans 278-291; the sequence is KLSESKADREEARA. The 170-residue stretch at 400–569 folds into the tr-type G domain; it reads PRAPVVTIMG…LLQAEVLELK (170 aa). A G1 region spans residues 409-416; the sequence is GHVDHGKT. 409 to 416 contacts GTP; the sequence is GHVDHGKT. The G2 stretch occupies residues 434–438; the sequence is GITQH. The interval 455–458 is G3; that stretch reads DTPG. Residues 455-459 and 509-512 each bind GTP; these read DTPGH and NKID. The interval 509 to 512 is G4; sequence NKID. Positions 545 to 547 are G5; the sequence is SAK.

The protein belongs to the TRAFAC class translation factor GTPase superfamily. Classic translation factor GTPase family. IF-2 subfamily.

Its subcellular location is the cytoplasm. One of the essential components for the initiation of protein synthesis. Protects formylmethionyl-tRNA from spontaneous hydrolysis and promotes its binding to the 30S ribosomal subunits. Also involved in the hydrolysis of GTP during the formation of the 70S ribosomal complex. The polypeptide is Translation initiation factor IF-2 (Edwardsiella ictaluri (strain 93-146)).